The sequence spans 132 residues: Small ribosomal subunit protein uS8 (132 aa).

The protein belongs to the universal ribosomal protein uS8 family. Part of the 30S ribosomal subunit. Contacts proteins S5 and S12.

Functionally, one of the primary rRNA binding proteins, it binds directly to 16S rRNA central domain where it helps coordinate assembly of the platform of the 30S subunit. This is Small ribosomal subunit protein uS8 from Brucella abortus (strain S19).